The following is a 207-amino-acid chain: Thymidylate kinase (207 aa).

9 to 16 (GGEGCGKS) contacts ATP.

It belongs to the thymidylate kinase family.

The enzyme catalyses dTMP + ATP = dTDP + ADP. Phosphorylation of dTMP to form dTDP in both de novo and salvage pathways of dTTP synthesis. In Dehalococcoides mccartyi (strain ATCC BAA-2266 / KCTC 15142 / 195) (Dehalococcoides ethenogenes (strain 195)), this protein is Thymidylate kinase.